We begin with the raw amino-acid sequence, 591 residues long: CDK5RAP3 protein homolog (591 aa).

The segment covering 232–250 (RAGAPSSAKGPASSASAPP) has biased composition (low complexity). Disordered regions lie at residues 232–252 (RAGAPSSAKGPASSASAPPAL) and 269–303 (TAPPEAESGAAGAGASGQGGGIEIDWGDSGGDAGG). The span at 279-303 (AGAGASGQGGGIEIDWGDSGGDAGG) shows a compositional bias: gly residues. 3 short sequence motifs (shuffled ATG8-binding motif) span residues 311 to 314 (IDWD), 334 to 337 (INWD), and 369 to 372 (IDWD). Over residues 386–401 (NNRAGDVAEGEAAASL) the composition is skewed to low complexity. The tract at residues 386-416 (NNRAGDVAEGEAAASLSGGGGGGASSGDPDD) is disordered.

Belongs to the CDK5RAP3 family. As to quaternary structure, substrate adapter component of the UFM1 ribosome E3 ligase (UREL) complex. Interacts with ATG8 family proteins.

In terms of biological role, substrate adapter of E3 ligase complexes mediating ufmylation, the covalent attachment of the ubiquitin-like modifier UFM1 to substrate proteins, and which is involved in various processes, such as ribosome recycling and reticulophagy (also called ER-phagy). The polypeptide is CDK5RAP3 protein homolog (Chlamydomonas reinhardtii (Chlamydomonas smithii)).